Reading from the N-terminus, the 189-residue chain is Resolvase (189 aa).

Positions 1–139 (MLVGYARVST…EGLKSAKARG (139 aa)) constitute a Resolvase/invertase-type recombinase catalytic domain. Catalysis depends on Ser-9, which acts as the O-(5'-phospho-DNA)-serine intermediate. Residues 130–151 (EGLKSAKARGRNGGRPSKRNDK) form a disordered region. The segment at residues 165–184 (IVDIVKQTGLSRATVYRVLN) is a DNA-binding region (H-T-H motif).

The protein belongs to the site-specific recombinase resolvase family.

In terms of biological role, a likely role for the res protein would be to stabilize pIP404 by reducing the number of plasmid multimers resulting from homologous recombination. This is Resolvase (res) from Clostridium perfringens.